Reading from the N-terminus, the 107-residue chain is Anti-adapter protein IraM (107 aa).

Belongs to the IraM/RssC family.

It is found in the cytoplasm. In terms of biological role, inhibits RpoS proteolysis by regulating RssB activity, thereby increasing the stability of the sigma stress factor RpoS during magnesium starvation. This is Anti-adapter protein IraM from Escherichia coli O7:K1 (strain IAI39 / ExPEC).